Consider the following 1214-residue polypeptide: Peregrin (1214 aa).

The C2H2-type zinc finger occupies 21 to 47 (YECPVETCRKVYKSYSGIEYHLYHYDH). Disordered stretches follow at residues 43 to 87 (YHYD…SPGR) and 118 to 177 (VVSE…PKLP). The span at 58-67 (LRKHKKKGRQ) shows a compositional bias: basic residues. The interval 59–222 (RKHKKKGRQS…VEYDMDEEDY (164 aa)) is interaction with KAT6A and KAT6B. Low complexity predominate over residues 74–85 (QSPSPSEVSQSP). Over residues 119-130 (VSEDEEAPEEAP) the composition is skewed to acidic residues. The residue at position 120 (Ser120) is a Phosphoserine. An N6-acetyllysine modification is found at Lys147. A compositionally biased stretch (basic residues) spans 148-167 (SGKHKNKEKRKDSNHHHHHN). Ser238 carries the post-translational modification Phosphoserine. The segment at 273-323 (DAVCCICNDGECQNSNVILFCDMCNLAVHQECYGVPYIPEGQWLCRRCLQS) adopts a PHD-type 1 zinc-finger fold. A C2HC pre-PHD-type zinc finger spans residues 327 to 360 (AVDCALCPNKGGAFKQTDDGRWAHVVCALWIPEV). The segment at 384-448 (LTCYICKQRG…RKTAYCDIHT (65 aa)) adopts a PHD-type 2 zinc-finger fold. The segment at 448–489 (TPPGSARRLPALSHSEGEEDEDEEEDEGKGWSSEKVKKAKAK) is disordered. Residues Ser460 and Ser462 each carry the phosphoserine modification. Residues 464 to 474 (GEEDEDEEEDE) show a composition bias toward acidic residues. An interaction with MEAF6 and ING5 region spans residues 501–821 (LAEKRAAAPV…IKKEMTALRR (321 aa)). A required for RUNX1 and RUNX2 transcriptional activation region spans residues 543–1079 (YWTLKRQSRN…RGAGWLSEDE (537 aa)). N6-acetyllysine is present on Lys580. The 105-residue stretch at 628–732 (MQLTPFLILL…EQGGAVLRQA (105 aa)) folds into the Bromo domain. The tract at residues 819–1062 (LRRKLAHQRE…VGTGRGVGHS (244 aa)) is disordered. Residues 825-838 (HQRETGRDGPERHG) are compositionally biased toward basic and acidic residues. Thr858 is subject to Phosphothreonine. Residues 858 to 871 (TDSAAEESSSQETS) are compositionally biased toward low complexity. A phosphoserine mark is found at Ser860, Ser917, Ser922, and Ser926. Positions 993-1021 (SLPRSSSDSESSSSSSSSAASDRTSTTPS) are enriched in low complexity. Position 1076 is a phosphoserine (Ser1076). Residues 1085-1168 (ALDLVWAKCR…RTKLVPLGVN (84 aa)) form the PWWP domain. Position 1187 is a phosphoserine (Ser1187).

As to quaternary structure, component of some HBO1 complex composed of KAT7/HBO1, MEAF6, ING5, and BRPF1. Component of the MOZ/MORF complex composed at least of ING5, KAT6A, KAT6B, MEAF6 and one of BRPF1, BRD1/BRPF2 and BRPF3. Interacts (via PHD-type zinc finger domains) with unmethylated histone H3 at 'Lys-4' (H3K4me0). Interacts with trimethylated 'Lys-36' of histone H3 (H3K36me3). Interacts with ING5; interaction directs BRPF1 to H4K4me3-enriched chromatin at the 5' of active genes. Interacts with KAT7. Acetylated by KAT6A. In terms of tissue distribution, high levels in testis.

It is found in the nucleus. Its subcellular location is the chromosome. The protein localises to the cytoplasm. Scaffold subunit of various histone acetyltransferase (HAT) complexes, such as the MOZ/MORF and HBO1 complexes, which have a histone H3 acetyltransferase activity. Plays a key role in HBO1 complex by directing KAT7/HBO1 specificity towards histone H3 'Lys-14' acetylation (H3K14ac). Some HAT complexes preferentially mediate histone H3 'Lys-23' (H3K23ac) acetylation. Positively regulates the transcription of RUNX1 and RUNX2. This Homo sapiens (Human) protein is Peregrin.